A 467-amino-acid chain; its full sequence is ESX-4 secretion system protein eccD4 (467 aa).

Transmembrane regions (helical) follow at residues G122–L142, A152–C172, V186–V206, V209–C229, A241–I261, L264–A284, L319–V339, I344–L364, S374–D394, P401–A421, and C439–V459.

It belongs to the EccD/Snm4 family. Part of the ESX-4 / type VII secretion system (T7SS), which is composed of cytosolic and membrane components.

It is found in the cell membrane. This is ESX-4 secretion system protein eccD4 (eccD4) from Mycobacterium tuberculosis (strain CDC 1551 / Oshkosh).